Reading from the N-terminus, the 95-residue chain is Large ribosomal subunit protein bL27 (95 aa).

A propeptide spanning residues Met-1–Phe-6 is cleaved from the precursor.

The protein belongs to the bacterial ribosomal protein bL27 family. Post-translationally, the N-terminus is cleaved by ribosomal processing cysteine protease Prp.

The chain is Large ribosomal subunit protein bL27 from Symbiobacterium thermophilum (strain DSM 24528 / JCM 14929 / IAM 14863 / T).